A 217-amino-acid polypeptide reads, in one-letter code: MFARYGRTTLTKTLLLCLAAFFCALLLPTLVQIPVMTLSLLMVLFSLYFFRDPSRTPVGNASAIVAPADGKVLLIRKTDHPFTGKNSTLVSIFMSPFNVHVNRIPINGRVTHLEYHPGKFLMAFDHNSMSDNERMDIGIENTQSKVFFSQVSGFLARRIVCHLTNDQNVRAGEKFGMIKFGSRLDIILPSQAEIALEEGKKTRAGETVVARLPNITT.

Ser-182 serves as the catalytic Schiff-base intermediate with substrate; via pyruvic acid. Pyruvic acid (Ser); by autocatalysis is present on Ser-182.

The protein belongs to the phosphatidylserine decarboxylase family. PSD-A subfamily. Heterodimer of a large membrane-associated beta subunit and a small pyruvoyl-containing alpha subunit. Pyruvate is required as a cofactor. Is synthesized initially as an inactive proenzyme. Formation of the active enzyme involves a self-maturation process in which the active site pyruvoyl group is generated from an internal serine residue via an autocatalytic post-translational modification. Two non-identical subunits are generated from the proenzyme in this reaction, and the pyruvate is formed at the N-terminus of the alpha chain, which is derived from the carboxyl end of the proenzyme. The post-translation cleavage follows an unusual pathway, termed non-hydrolytic serinolysis, in which the side chain hydroxyl group of the serine supplies its oxygen atom to form the C-terminus of the beta chain, while the remainder of the serine residue undergoes an oxidative deamination to produce ammonia and the pyruvoyl prosthetic group on the alpha chain.

The protein localises to the cell membrane. The enzyme catalyses a 1,2-diacyl-sn-glycero-3-phospho-L-serine + H(+) = a 1,2-diacyl-sn-glycero-3-phosphoethanolamine + CO2. It functions in the pathway phospholipid metabolism; phosphatidylethanolamine biosynthesis; phosphatidylethanolamine from CDP-diacylglycerol: step 2/2. Catalyzes the formation of phosphatidylethanolamine (PtdEtn) from phosphatidylserine (PtdSer). The sequence is that of Phosphatidylserine decarboxylase proenzyme from Prosthecochloris aestuarii (strain DSM 271 / SK 413).